Consider the following 318-residue polypeptide: NADH-ubiquinone oxidoreductase chain 1 (318 aa).

The next 8 helical transmembrane spans lie at Phe2–Leu22, Met70–Pro90, Leu100–Gly120, Ala147–Ile167, Tyr171–Ala191, Ala217–Phe237, Leu254–Ser276, and Leu294–Ile314.

The protein belongs to the complex I subunit 1 family. As to quaternary structure, core subunit of respiratory chain NADH dehydrogenase (Complex I) which is composed of 45 different subunits.

The protein localises to the mitochondrion inner membrane. The catalysed reaction is a ubiquinone + NADH + 5 H(+)(in) = a ubiquinol + NAD(+) + 4 H(+)(out). Its function is as follows. Core subunit of the mitochondrial membrane respiratory chain NADH dehydrogenase (Complex I) which catalyzes electron transfer from NADH through the respiratory chain, using ubiquinone as an electron acceptor. Essential for the catalytic activity and assembly of complex I. This Equus asinus (Donkey) protein is NADH-ubiquinone oxidoreductase chain 1 (MT-ND1).